We begin with the raw amino-acid sequence, 335 residues long: MPIRHCIVHLIDKKPDGSPAVLHARDTELGASDAIENLLADLNDSYNAKQGKAWGFFHGESGAYPLSGWLKQYLEQEKDFAAFSRVAVEHLQKLMEESNLSTGGHILFAHYQQGMTDYLAIALLHHSEGVAVNAELDVTPSRHLDLGQLHLAARINLSEWKNNQNSKQYISFIKGKNGKKVSDYFRDFIGCQEGVDGPGETRTLLKAFSDFVESEDLPEEAAREKTQTLVDYATTQTKLGEPVTLEELSSLIDEDRPKAFYDHIRNKDYGLSPEIPADKRTLNQFRRFTGRAEGLSISFEAHLLGDKVEYDEVAGTLIIKGLPTQLVDQLKRRKD.

Belongs to the YejK family.

The protein localises to the cytoplasm. Its subcellular location is the nucleoid. In Pseudomonas putida (strain W619), this protein is Nucleoid-associated protein PputW619_4243.